A 287-amino-acid polypeptide reads, in one-letter code: PAK4-inhibitor INKA1 (287 aa).

Disordered regions lie at residues Gly22–Asp59 and Ser138–Pro157. A compositionally biased stretch (polar residues) spans Gln35–Leu50. The span at Ser138–Pro147 shows a compositional bias: low complexity. Inka box stretches follow at residues Glu168–Glu205 and Pro261–Leu287.

This sequence belongs to the INKA family. In terms of assembly, interacts with PAK4.

It is found in the nucleus. It localises to the cytoplasm. In terms of biological role, inhibitor of the serine/threonine-protein kinase PAK4. Acts by binding PAK4 in a substrate-like manner, inhibiting the protein kinase activity. The chain is PAK4-inhibitor INKA1 from Homo sapiens (Human).